The sequence spans 355 residues: Blue-sensitive opsin (355 aa).

Residues 1–36 lie on the Extracellular side of the membrane; the sequence is MNGTEGINFYVPLSNKTGLVRSPFEYPQYYLAEPWK. N-linked (GlcNAc...) asparagine glycosylation is found at N2 and N15. A helical transmembrane segment spans residues 37–61; that stretch reads YKVVCCYIFFLIFTGLPINILTLLV. Residues 62–73 lie on the Cytoplasmic side of the membrane; that stretch reads TFKHKKLRQPLN. A helical membrane pass occupies residues 74 to 98; that stretch reads YILVNLAVADLFMACFGFTVTFYTA. Residues 99 to 113 are Extracellular-facing; that stretch reads WNGYFIFGPIGCAIE. A disulfide bridge connects residues C110 and C187. A helical membrane pass occupies residues 114–133; that stretch reads GFFATLGGQVALWSLVVLAI. Residues 134–152 are Cytoplasmic-facing; that stretch reads ERYIVVCKPMGNFRFSATH. The helical transmembrane segment at 153-176 threads the bilayer; that stretch reads ALMGISFTWFMSFSCAAPPLLGWS. Topologically, residues 177-202 are extracellular; it reads RYIPEGMQCSCGPDYYTLNPDYHNES. A glycan (N-linked (GlcNAc...) asparagine) is linked at N200. The helical transmembrane segment at 203–230 threads the bilayer; sequence YVLYMFGVHFVIPVVVIFFSYGRLICKV. The Cytoplasmic segment spans residues 231-252; that stretch reads REAAAQQQESASTQKAEREVTR. A helical membrane pass occupies residues 253–276; sequence MVILMVLGFLLAWTPYAMVAFWIF. The Extracellular portion of the chain corresponds to 277–284; the sequence is TNKGVDFS. The helical transmembrane segment at 285–309 threads the bilayer; it reads ATLMSVPAFFSKSSSLYNPIIYVLM. The residue at position 296 (K296) is an N6-(retinylidene)lysine. Topologically, residues 310-355 are cytoplasmic; the sequence is NKQFRNCMITTICCGKNPFGDEDVSSSVSQSKTEVSSVSSSQVSPA. S-palmitoyl cysteine attachment occurs at residues C322 and C323. Residues 332 to 355 form a disordered region; that stretch reads DVSSSVSQSKTEVSSVSSSQVSPA. Residues 334-355 show a composition bias toward low complexity; that stretch reads SSSVSQSKTEVSSVSSSQVSPA.

Belongs to the G-protein coupled receptor 1 family. Opsin subfamily. Post-translationally, phosphorylated on some or all of the serine and threonine residues present in the C-terminal region.

The protein resides in the membrane. Visual pigments are the light-absorbing molecules that mediate vision. They consist of an apoprotein, opsin, covalently linked to cis-retinal. This opsin uses a vitamin A2 chromophore. In Anolis carolinensis (Green anole), this protein is Blue-sensitive opsin.